We begin with the raw amino-acid sequence, 124 residues long: Large ribosomal subunit protein eL22y (124 aa).

The protein belongs to the eukaryotic ribosomal protein eL22 family.

This Arabidopsis thaliana (Mouse-ear cress) protein is Large ribosomal subunit protein eL22y (RPL22C).